Reading from the N-terminus, the 815-residue chain is Probable receptor-like protein kinase At2g39360 (815 aa).

Positions 1–26 are cleaved as a signal peptide; sequence MINLKLFLELKLCFLITLLCSSHISS. Residues 27 to 407 lie on the Extracellular side of the membrane; that stretch reads VSDTFFINCG…SSSNKSSNTS (381 aa). N-linked (GlcNAc...) asparagine glycosylation is found at Asn40, Asn45, Asn125, Asn146, Asn209, Asn244, Asn277, Asn331, Asn355, Asn401, and Asn405. A helical membrane pass occupies residues 408 to 428; it reads VGLIAGLSAALCVALVFGVVV. Over 429–815 the chain is Cytoplasmic; it reads SWWCIRKRRR…FAQMVREETR (387 aa). The region spanning 487-761 is the Protein kinase domain; the sequence is FDESLVIGVG…GDLLWNLEFM (275 aa). ATP-binding positions include 493-501 and Lys515; that span reads IGVGGFGKV. Asp612 acts as the Proton acceptor in catalysis.

This sequence belongs to the protein kinase superfamily. Ser/Thr protein kinase family.

The protein resides in the cell membrane. This Arabidopsis thaliana (Mouse-ear cress) protein is Probable receptor-like protein kinase At2g39360.